The sequence spans 397 residues: Riboflavin biosynthesis protein RibBA (397 aa).

The tract at residues 1–199 (MFHRIEEALE…IEDLIAYRRH (199 aa)) is DHBP synthase. Residues 26-27 (RE), Asp-31, 138-142 (RAGHT), and Glu-162 each bind D-ribulose 5-phosphate. Glu-27 lines the Mg(2+) pocket. Residue His-141 coordinates Mg(2+). Residues 200–397 (HETLVTREVE…VNKLGHLLNL (198 aa)) form a GTP cyclohydrolase II region. Residue 250–254 (RVHSE) coordinates GTP. Positions 255, 266, and 268 each coordinate Zn(2+). Residues Gln-271, 293 to 295 (EGR), and Thr-315 contribute to the GTP site. Asp-327 (proton acceptor; for GTP cyclohydrolase activity) is an active-site residue. Arg-329 acts as the Nucleophile; for GTP cyclohydrolase activity in catalysis. GTP is bound by residues Thr-350 and Lys-355.

It in the N-terminal section; belongs to the DHBP synthase family. This sequence in the C-terminal section; belongs to the GTP cyclohydrolase II family. Mg(2+) is required as a cofactor. The cofactor is Mn(2+). Requires Zn(2+) as cofactor.

The catalysed reaction is D-ribulose 5-phosphate = (2S)-2-hydroxy-3-oxobutyl phosphate + formate + H(+). The enzyme catalyses GTP + 4 H2O = 2,5-diamino-6-hydroxy-4-(5-phosphoribosylamino)-pyrimidine + formate + 2 phosphate + 3 H(+). The protein operates within cofactor biosynthesis; riboflavin biosynthesis; 2-hydroxy-3-oxobutyl phosphate from D-ribulose 5-phosphate: step 1/1. It participates in cofactor biosynthesis; riboflavin biosynthesis; 5-amino-6-(D-ribitylamino)uracil from GTP: step 1/4. Its function is as follows. Catalyzes the conversion of D-ribulose 5-phosphate to formate and 3,4-dihydroxy-2-butanone 4-phosphate. Functionally, catalyzes the conversion of GTP to 2,5-diamino-6-ribosylamino-4(3H)-pyrimidinone 5'-phosphate (DARP), formate and pyrophosphate. In Bacillus cereus (strain ATCC 10987 / NRS 248), this protein is Riboflavin biosynthesis protein RibBA.